The primary structure comprises 207 residues: Mediator of RNA polymerase II transcription subunit 18 (207 aa).

This sequence belongs to the Mediator complex subunit 18 family. As to quaternary structure, component of the Mediator complex. Interacts with med17, prk1 and rbp1.

It is found in the nucleus. In terms of biological role, component of the Mediator complex, a coactivator involved in the regulated transcription of nearly all RNA polymerase II-dependent genes. Mediator functions as a bridge to convey information from gene-specific regulatory proteins to the basal RNA polymerase II transcription machinery. Mediator is recruited to promoters by direct interactions with regulatory proteins and serves as a scaffold for the assembly of a functional preinitiation complex with RNA polymerase II and the general transcription factors. In Schizosaccharomyces pombe (strain 972 / ATCC 24843) (Fission yeast), this protein is Mediator of RNA polymerase II transcription subunit 18 (med18).